A 106-amino-acid chain; its full sequence is MIISTTSQLEGRPIAEYLGVVSSESVQGINFVRDFFTRFRDFFGGRSQTLESALREAREQATEELMARARQLQADAIVGVDFEISMPSVQGGMVVVFATGTAVRLK.

It belongs to the UPF0145 family.

In Pseudomonas putida (strain GB-1), this protein is UPF0145 protein PputGB1_2909.